Here is an 886-residue protein sequence, read N- to C-terminus: Isoleucine--tRNA ligase (886 aa).

The 'HIGH' region signature appears at 60–70 (PYANGDIHIGH). E546 contacts L-isoleucyl-5'-AMP. The short motif at 587–591 (KMSKS) is the 'KMSKS' region element. K590 is an ATP binding site. Residues C856, C859, C870, and C873 each coordinate Zn(2+).

This sequence belongs to the class-I aminoacyl-tRNA synthetase family. IleS type 1 subfamily. In terms of assembly, monomer. Zn(2+) serves as cofactor.

The protein resides in the cytoplasm. The enzyme catalyses tRNA(Ile) + L-isoleucine + ATP = L-isoleucyl-tRNA(Ile) + AMP + diphosphate. In terms of biological role, catalyzes the attachment of isoleucine to tRNA(Ile). As IleRS can inadvertently accommodate and process structurally similar amino acids such as valine, to avoid such errors it has two additional distinct tRNA(Ile)-dependent editing activities. One activity is designated as 'pretransfer' editing and involves the hydrolysis of activated Val-AMP. The other activity is designated 'posttransfer' editing and involves deacylation of mischarged Val-tRNA(Ile). In Mesomycoplasma hyopneumoniae (strain 7448) (Mycoplasma hyopneumoniae), this protein is Isoleucine--tRNA ligase.